Here is a 286-residue protein sequence, read N- to C-terminus: tRNA dimethylallyltransferase (286 aa).

The interval 18–21 (DSMQ) is interaction with substrate tRNA.

Belongs to the IPP transferase family. As to quaternary structure, monomer. It depends on Mg(2+) as a cofactor.

It catalyses the reaction adenosine(37) in tRNA + dimethylallyl diphosphate = N(6)-dimethylallyladenosine(37) in tRNA + diphosphate. Functionally, catalyzes the transfer of a dimethylallyl group onto the adenine at position 37 in tRNAs that read codons beginning with uridine, leading to the formation of N6-(dimethylallyl)adenosine (i(6)A). The protein is tRNA dimethylallyltransferase of Tropheryma whipplei (strain TW08/27) (Whipple's bacillus).